Consider the following 168-residue polypeptide: Peptide deformylase 2 (168 aa).

Positions 91 and 133 each coordinate Fe cation. The active site involves Glu-134. Fe cation is bound at residue His-137.

This sequence belongs to the polypeptide deformylase family. It depends on Fe(2+) as a cofactor.

It catalyses the reaction N-terminal N-formyl-L-methionyl-[peptide] + H2O = N-terminal L-methionyl-[peptide] + formate. Its function is as follows. Removes the formyl group from the N-terminal Met of newly synthesized proteins. Requires at least a dipeptide for an efficient rate of reaction. N-terminal L-methionine is a prerequisite for activity but the enzyme has broad specificity at other positions. In Vibrio vulnificus (strain CMCP6), this protein is Peptide deformylase 2.